A 195-amino-acid chain; its full sequence is MALDTPLSRAPAIAPEPKGILDPATGLPIGATDPTFLSINDELADRGFLLTTADDLITWARTGSLMWMTFGLACCAVEMMQMSMPRYDAERFGFAPRASPRQSDVMIVAGTLTNKMAPALRKVYDQMPEPRYVISMGSCANGGGYYHYSYSVVRGCDRVVPVDIYVPGCPPSAEALLYGVLLLQKKIRRTGTIER.

Cys-74, Cys-75, Cys-139, and Cys-169 together coordinate [4Fe-4S] cluster.

This sequence belongs to the complex I 20 kDa subunit family. NDH-1 is composed of 14 different subunits. Subunits NuoB, C, D, E, F, and G constitute the peripheral sector of the complex. [4Fe-4S] cluster is required as a cofactor.

The protein resides in the cell inner membrane. The catalysed reaction is a quinone + NADH + 5 H(+)(in) = a quinol + NAD(+) + 4 H(+)(out). Its function is as follows. NDH-1 shuttles electrons from NADH, via FMN and iron-sulfur (Fe-S) centers, to quinones in the respiratory chain. The immediate electron acceptor for the enzyme in this species is believed to be ubiquinone. Couples the redox reaction to proton translocation (for every two electrons transferred, four hydrogen ions are translocated across the cytoplasmic membrane), and thus conserves the redox energy in a proton gradient. In Methylobacterium sp. (strain 4-46), this protein is NADH-quinone oxidoreductase subunit B.